The primary structure comprises 884 residues: Valine--tRNA ligase (884 aa).

A 'HIGH' region motif is present at residues 46-56; the sequence is PNVTGKLHLGH. The short motif at 520 to 524 is the 'KMSKS' region element; the sequence is KMSKS. K523 is an ATP binding site. Residues 809 to 844 adopt a coiled-coil conformation; the sequence is LADLLNVEEELARLEKELAKWQKELNMVGKKLSNER.

Belongs to the class-I aminoacyl-tRNA synthetase family. ValS type 1 subfamily. As to quaternary structure, monomer.

Its subcellular location is the cytoplasm. It carries out the reaction tRNA(Val) + L-valine + ATP = L-valyl-tRNA(Val) + AMP + diphosphate. Its function is as follows. Catalyzes the attachment of valine to tRNA(Val). As ValRS can inadvertently accommodate and process structurally similar amino acids such as threonine, to avoid such errors, it has a 'posttransfer' editing activity that hydrolyzes mischarged Thr-tRNA(Val) in a tRNA-dependent manner. This Streptococcus agalactiae serotype Ia (strain ATCC 27591 / A909 / CDC SS700) protein is Valine--tRNA ligase.